A 229-amino-acid polypeptide reads, in one-letter code: ATP-dependent dethiobiotin synthetase BioD (229 aa).

15-20 contributes to the ATP binding site; sequence EIGKTL. T19 lines the Mg(2+) pocket. The active site involves K40. ATP-binding positions include D57, 118-121, and 207-209; these read EGVG and PRL. 2 residues coordinate Mg(2+): D57 and E118.

Belongs to the dethiobiotin synthetase family. In terms of assembly, homodimer. Requires Mg(2+) as cofactor.

Its subcellular location is the cytoplasm. It carries out the reaction (7R,8S)-7,8-diammoniononanoate + CO2 + ATP = (4R,5S)-dethiobiotin + ADP + phosphate + 3 H(+). It participates in cofactor biosynthesis; biotin biosynthesis; biotin from 7,8-diaminononanoate: step 1/2. In terms of biological role, catalyzes a mechanistically unusual reaction, the ATP-dependent insertion of CO2 between the N7 and N8 nitrogen atoms of 7,8-diaminopelargonic acid (DAPA, also called 7,8-diammoniononanoate) to form a ureido ring. In Ralstonia nicotianae (strain ATCC BAA-1114 / GMI1000) (Ralstonia solanacearum), this protein is ATP-dependent dethiobiotin synthetase BioD.